A 151-amino-acid chain; its full sequence is Ribonuclease H (151 aa).

Residues 1-143 (MYKKIEIFTD…CDQLARLAAK (143 aa)) form the RNase H type-1 domain. Mg(2+)-binding residues include Asp10, Glu48, Asp70, and Asp135.

It belongs to the RNase H family. In terms of assembly, monomer. It depends on Mg(2+) as a cofactor.

Its subcellular location is the cytoplasm. It carries out the reaction Endonucleolytic cleavage to 5'-phosphomonoester.. Endonuclease that specifically degrades the RNA of RNA-DNA hybrids. This Blochmanniella pennsylvanica (strain BPEN) protein is Ribonuclease H.